The sequence spans 185 residues: Elongation factor P (185 aa).

This sequence belongs to the elongation factor P family.

It localises to the cytoplasm. The protein operates within protein biosynthesis; polypeptide chain elongation. In terms of biological role, involved in peptide bond synthesis. Stimulates efficient translation and peptide-bond synthesis on native or reconstituted 70S ribosomes in vitro. Probably functions indirectly by altering the affinity of the ribosome for aminoacyl-tRNA, thus increasing their reactivity as acceptors for peptidyl transferase. This chain is Elongation factor P, found in Geobacillus sp. (strain WCH70).